Here is a 111-residue protein sequence, read N- to C-terminus: Large ribosomal subunit protein uL22 (111 aa).

It belongs to the universal ribosomal protein uL22 family. Part of the 50S ribosomal subunit.

This protein binds specifically to 23S rRNA; its binding is stimulated by other ribosomal proteins, e.g. L4, L17, and L20. It is important during the early stages of 50S assembly. It makes multiple contacts with different domains of the 23S rRNA in the assembled 50S subunit and ribosome. Its function is as follows. The globular domain of the protein is located near the polypeptide exit tunnel on the outside of the subunit, while an extended beta-hairpin is found that lines the wall of the exit tunnel in the center of the 70S ribosome. This chain is Large ribosomal subunit protein uL22, found in Alkalilimnicola ehrlichii (strain ATCC BAA-1101 / DSM 17681 / MLHE-1).